The following is a 1943-amino-acid chain: Trichohyalin (1943 aa).

An S-100-like region spans residues 1-91 (MSPLLRSICD…AQACYYALGQ (91 aa)). EF-hand domains follow at residues 23–48 (CDGA…LRRP) and 49–84 (HDPK…VAQA). Ca(2+) contacts are provided by aspartate 32, aspartate 62, aspartate 64, asparagine 66, arginine 68, and glutamate 73. 3 disordered regions span residues 110-164 (LQDR…LEQR), 186-209 (RRAE…DEEQ), and 222-274 (GREE…LQEE). The segment covering 197 to 209 (KGHETEEFPDEEQ) has biased composition (basic and acidic residues). One copy of the 1-1; approximate repeat lies at 314-326 (RREQQEERREQQE). A 5 X 13 AA tandem repeats of R-R-E-Q-E-E-E-R-R-E-Q-Q-L region spans residues 314-377 (RREQQEERRE…QEEERREQQL (64 aa)). The 1-2; approximate repeat unit spans residues 327–339 (RREQQEERREQQL). The 1-3; approximate repeat unit spans residues 340–351 (RREQEERREQQL). A run of 10 repeats spans residues 352–364 (RREQ…EQQL), 365–377 (RREQ…EQQL), 378–383 (RREQQL), 384–389 (RREQQL), 390–395 (RREQQL), 396–401 (RREQQL), 402–407 (RREQQL), 408–413 (RREQQL), 414–419 (RREQQL), and 420–425 (RREQQL). The 8 X 6 AA tandem repeats of R-R-E-Q-Q-L stretch occupies residues 378–425 (RREQQLRREQQLRREQQLRREQQLRREQQLRREQQLRREQQLRREQQL). The segment at 425 to 683 (LRREQEEERH…REHEEERREQ (259 aa)) is 9 X 28 AA approximate tandem repeats. Disordered stretches follow at residues 426-485 (RREQ…EERR), 509-546 (REQE…EERR), 608-819 (ERLE…EKEQ), and 837-872 (EEQL…RRDQ). 4 stretches are compositionally biased toward basic and acidic residues: residues 608-684 (ERLE…REQE), 724-781 (RKQE…ERGR), 789-812 (PLRE…RFLP), and 859-872 (DQER…RRDQ). A run of 10 repeats spans residues 906–935 (LQEE…EEEQ), 936–965 (LQQE…KDKK), 966–995 (LQQK…EEEE), 996–1025 (LQQE…KKDE), 1026–1055 (LQQE…EEEE), 1056–1085 (LQQE…KEEE), 1086–1115 (LQQE…EEEE), 1116–1145 (LQQE…EEEE), 1146–1175 (VQQE…EEEE), and 1176–1204 (LQQE…EEEE). Residues 906–1204 (LQEEEEELQR…RERQYREEEE (299 aa)) form a 10 X 30 AA tandem repeats region. The span at 950-992 (KRRRQERERQYRKDKKLQQKEEQLLGEEPEKRRRQEREKKYRE) shows a compositional bias: basic and acidic residues. Disordered stretches follow at residues 950 to 1000 (KRRR…QQEE), 1046 to 1120 (RERQ…QQEE), 1137 to 1162 (ERQY…EKRR), 1193 to 1371 (QERE…RHQE), 1404 to 1435 (REQQ…FREE), 1492 to 1691 (QQLR…ERDR), 1757 to 1820 (PERE…RDGK), 1834 to 1864 (EQRL…EQEL), and 1876 to 1928 (RERK…VRSS). Acidic residues predominate over residues 1052–1064 (EEEELQQEEEQLL). Basic and acidic residues-rich tracts occupy residues 1065–1085 (GEER…KEEE) and 1092–1111 (QLLR…RQCR). Over residues 1142-1151 (EEEEVQQEEE) the composition is skewed to acidic residues. Over residues 1152–1162 (QLLREEPEKRR) the composition is skewed to basic and acidic residues. Basic and acidic residues-rich tracts occupy residues 1214 to 1263 (YRDE…DRQS) and 1274 to 1371 (QQER…RHQE). A 23 X 26 AA approximate tandem repeats region spans residues 1292–1894 (HFPEEEQLER…IRRQQKEEQR (603 aa)). 3 stretches are compositionally biased toward basic and acidic residues: residues 1492–1524 (QQLR…EQQL), 1533–1673 (FLQE…REEE), and 1682–1691 (QQLRRQERDR). Residues 1876–1912 (RERKLREEHIRRQQKEEQRHRQVGEIKSQEGKGHGRL) are compositionally biased toward basic and acidic residues.

The protein belongs to the S100-fused protein family. As to quaternary structure, monomer. In terms of processing, substrate of transglutaminase. Some 200 arginines are probably converted to citrullines by peptidylarginine deimidase. As to expression, found in the hard keratinizing tissues such as the inner root sheath (IRS) of hair follicles and medulla, and in the filiform papillae of dorsal tongue epithelium.

In terms of biological role, intermediate filament-associated protein that associates in regular arrays with keratin intermediate filaments (KIF) of the inner root sheath cells of the hair follicle and the granular layer of the epidermis. It later becomes cross-linked to KIF by isodipeptide bonds. It may serve as scaffold protein, together with involucrin, in the organization of the cell envelope or even anchor the cell envelope to the KIF network. It may be involved in its own calcium-dependent postsynthetic processing during terminal differentiation. The chain is Trichohyalin (TCHH) from Homo sapiens (Human).